Here is a 507-residue protein sequence, read N- to C-terminus: Arabinose import ATP-binding protein AraG (507 aa).

2 consecutive ABC transporter domains span residues 14-249 (LRFN…MVGR) and 249-505 (RDIQ…LPRT). 46–53 (GENGAGKS) contacts ATP.

Belongs to the ABC transporter superfamily. Arabinose importer (TC 3.A.1.2.2) family. The complex is composed of two ATP-binding proteins (AraG), two transmembrane proteins (AraH) and a solute-binding protein (AraF).

It localises to the cell inner membrane. It catalyses the reaction L-arabinose(out) + ATP + H2O = L-arabinose(in) + ADP + phosphate + H(+). Its function is as follows. Part of the ABC transporter complex AraFGH involved in arabinose import. Responsible for energy coupling to the transport system. The protein is Arabinose import ATP-binding protein AraG of Pseudomonas syringae pv. tomato (strain ATCC BAA-871 / DC3000).